Consider the following 703-residue polypeptide: Epidermal growth factor receptor (703 aa).

Residues 1–30 (MGVRSPLSASGPRGAAVLVLLLLGVALCSA) form the signal peptide. The Extracellular segment spans residues 31–654 (VEEKKVCQGT…GCPNGSKTPS (624 aa)). C37 and C64 are joined by a disulfide. N134, N190, and N200 each carry an N-linked (GlcNAc...) asparagine glycan. Intrachain disulfides connect C164/C194, C197/C206, C201/C214, C222/C230, C226/C238, C239/C247, C243/C255, C258/C267, C271/C298, C302/C314, C318/C333, C336/C340, and C344/C369. Residues N359, N368, and N420 are each glycosylated (N-linked (GlcNAc...) asparagine). 11 disulfides stabilise this stretch: C477–C506, C513–C522, C517–C530, C533–C542, C546–C562, C565–C581, C569–C589, C592–C601, C605–C627, C630–C638, and C634–C646. N573 and N578 each carry an N-linked (GlcNAc...) asparagine glycan. Residues N613 and N633 are each glycosylated (N-linked (GlcNAc...) asparagine). N648 carries N-linked (GlcNAc...) asparagine glycosylation. A helical membrane pass occupies residues 655 to 667 (IAAGVVGGLLCLV). Over 668-703 (VVGLGIGLYLRRRHIVRKRTLRRLLQERELVEPLTP) the chain is Cytoplasmic. A phosphothreonine mark is found at T687 and T702.

This sequence belongs to the protein kinase superfamily. Tyr protein kinase family. EGF receptor subfamily. In terms of assembly, binding of the ligand triggers homo- and/or heterodimerization of the receptor triggering its autophosphorylation. Post-translationally, phosphorylated. Autophosphorylates.

It localises to the cell membrane. The protein localises to the endoplasmic reticulum membrane. Its subcellular location is the golgi apparatus membrane. It is found in the nucleus membrane. The protein resides in the endosome. It localises to the endosome membrane. The protein localises to the nucleus. It catalyses the reaction L-tyrosyl-[protein] + ATP = O-phospho-L-tyrosyl-[protein] + ADP + H(+). Endocytosis and inhibition of the activated EGFR by phosphatases constitute immediate regulatory mechanisms. Moreover, inducible feedback inhibitors may constitute alternative regulatory mechanisms for the EGFR signaling. Its function is as follows. Receptor tyrosine kinase binding ligands of the EGF family and activating several signaling cascades to convert extracellular cues into appropriate cellular responses. Known ligands include EGF and TGFA/TGF-alpha. Ligand binding triggers receptor homo- and/or heterodimerization and autophosphorylation on key cytoplasmic residues. The phosphorylated receptor recruits adapter proteins like GRB2 which in turn activates complex downstream signaling cascades. Activates at least 4 major downstream signaling cascades including the RAS-RAF-MEK-ERK, PI3 kinase-AKT, PLCgamma-PKC and STATs modules. May also activate the NF-kappa-B signaling cascade. The protein is Epidermal growth factor receptor (EGFR) of Gallus gallus (Chicken).